A 266-amino-acid polypeptide reads, in one-letter code: 3-deoxy-manno-octulosonate cytidylyltransferase 1 (266 aa).

Belongs to the KdsB family.

The protein localises to the cytoplasm. It catalyses the reaction 3-deoxy-alpha-D-manno-oct-2-ulosonate + CTP = CMP-3-deoxy-beta-D-manno-octulosonate + diphosphate. It functions in the pathway nucleotide-sugar biosynthesis; CMP-3-deoxy-D-manno-octulosonate biosynthesis; CMP-3-deoxy-D-manno-octulosonate from 3-deoxy-D-manno-octulosonate and CTP: step 1/1. The protein operates within bacterial outer membrane biogenesis; lipopolysaccharide biosynthesis. In terms of biological role, activates KDO (a required 8-carbon sugar) for incorporation into bacterial lipopolysaccharide in Gram-negative bacteria. In Paraburkholderia phytofirmans (strain DSM 17436 / LMG 22146 / PsJN) (Burkholderia phytofirmans), this protein is 3-deoxy-manno-octulosonate cytidylyltransferase 1.